A 45-amino-acid polypeptide reads, in one-letter code: DNA-directed RNA polymerase subunit Rpo12 (45 aa).

Zn(2+) contacts are provided by Cys-8, Cys-23, and Cys-26.

It belongs to the archaeal Rpo12/eukaryotic RPC10 RNA polymerase subunit family. As to quaternary structure, part of the RNA polymerase complex. Zn(2+) serves as cofactor.

Its subcellular location is the cytoplasm. The catalysed reaction is RNA(n) + a ribonucleoside 5'-triphosphate = RNA(n+1) + diphosphate. DNA-dependent RNA polymerase (RNAP) catalyzes the transcription of DNA into RNA using the four ribonucleoside triphosphates as substrates. The polypeptide is DNA-directed RNA polymerase subunit Rpo12 (Methanocella arvoryzae (strain DSM 22066 / NBRC 105507 / MRE50)).